The chain runs to 485 residues: N-succinylglutamate 5-semialdehyde dehydrogenase 2 (485 aa).

221 to 226 (GSAAAG) is an NAD(+) binding site. Active-site residues include Glu-244 and Cys-279.

This sequence belongs to the aldehyde dehydrogenase family. AstD subfamily.

It carries out the reaction N-succinyl-L-glutamate 5-semialdehyde + NAD(+) + H2O = N-succinyl-L-glutamate + NADH + 2 H(+). It functions in the pathway amino-acid degradation; L-arginine degradation via AST pathway; L-glutamate and succinate from L-arginine: step 4/5. Functionally, catalyzes the NAD-dependent reduction of succinylglutamate semialdehyde into succinylglutamate. In Caulobacter vibrioides (strain ATCC 19089 / CIP 103742 / CB 15) (Caulobacter crescentus), this protein is N-succinylglutamate 5-semialdehyde dehydrogenase 2.